The chain runs to 211 residues: Large ribosomal subunit protein eL13 (211 aa).

Position 16 is an N6-acetyllysine (Lys-16). A phosphoserine mark is found at Ser-52, Ser-77, and Ser-106. Glycyl lysine isopeptide (Lys-Gly) (interchain with G-Cter in SUMO2) cross-links involve residues Lys-123 and Lys-145. Lys-174 is covalently cross-linked (Glycyl lysine isopeptide (Lys-Gly) (interchain with G-Cter in SUMO1); alternate). Residues Lys-174 and Lys-177 each participate in a glycyl lysine isopeptide (Lys-Gly) (interchain with G-Cter in SUMO2); alternate cross-link. The residue at position 177 (Lys-177) is an N6-acetyllysine; alternate.

Belongs to the eukaryotic ribosomal protein eL13 family. Component of the 60S large ribosomal subunit (LSU). Higher levels of expression in benign breast lesions than in carcinomas.

It is found in the cytoplasm. Its function is as follows. Component of the ribosome, a large ribonucleoprotein complex responsible for the synthesis of proteins in the cell. The small ribosomal subunit (SSU) binds messenger RNAs (mRNAs) and translates the encoded message by selecting cognate aminoacyl-transfer RNA (tRNA) molecules. The large subunit (LSU) contains the ribosomal catalytic site termed the peptidyl transferase center (PTC), which catalyzes the formation of peptide bonds, thereby polymerizing the amino acids delivered by tRNAs into a polypeptide chain. The nascent polypeptides leave the ribosome through a tunnel in the LSU and interact with protein factors that function in enzymatic processing, targeting, and the membrane insertion of nascent chains at the exit of the ribosomal tunnel. As part of the LSU, it is probably required for its formation and the maturation of rRNAs. Plays a role in bone development. The protein is Large ribosomal subunit protein eL13 (RPL13) of Homo sapiens (Human).